Reading from the N-terminus, the 296-residue chain is 4-hydroxybenzoate octaprenyltransferase (296 aa).

The next 8 membrane-spanning stretches (helical) occupy residues 28 to 48 (IGTL…SDGI), 51 to 71 (LAVL…GCVI), 102 to 122 (LLLT…LNHL), 143 to 163 (FFPI…PMAF), 174 to 194 (AWIL…VYAM), 212 to 232 (FGRY…LLMA), 233 to 253 (VLGA…IVLL), and 274 to 294 (FLAN…HTFF).

This sequence belongs to the UbiA prenyltransferase family. Mg(2+) serves as cofactor.

It is found in the cell inner membrane. It carries out the reaction all-trans-octaprenyl diphosphate + 4-hydroxybenzoate = 4-hydroxy-3-(all-trans-octaprenyl)benzoate + diphosphate. Its pathway is cofactor biosynthesis; ubiquinone biosynthesis. Functionally, catalyzes the prenylation of para-hydroxybenzoate (PHB) with an all-trans polyprenyl group. Mediates the second step in the final reaction sequence of ubiquinone-8 (UQ-8) biosynthesis, which is the condensation of the polyisoprenoid side chain with PHB, generating the first membrane-bound Q intermediate 3-octaprenyl-4-hydroxybenzoate. This chain is 4-hydroxybenzoate octaprenyltransferase, found in Neisseria gonorrhoeae (strain NCCP11945).